Reading from the N-terminus, the 1104-residue chain is Isoleucine--tRNA ligase (1104 aa).

The 'HIGH' region signature appears at 48–58 (PYTTGRIHLGT). Positions 644 to 648 (KMSKS) match the 'KMSKS' region motif. An ATP-binding site is contributed by Lys647.

Belongs to the class-I aminoacyl-tRNA synthetase family. IleS type 2 subfamily. Monomer. The cofactor is Zn(2+).

The protein resides in the cytoplasm. It catalyses the reaction tRNA(Ile) + L-isoleucine + ATP = L-isoleucyl-tRNA(Ile) + AMP + diphosphate. Functionally, catalyzes the attachment of isoleucine to tRNA(Ile). As IleRS can inadvertently accommodate and process structurally similar amino acids such as valine, to avoid such errors it has two additional distinct tRNA(Ile)-dependent editing activities. One activity is designated as 'pretransfer' editing and involves the hydrolysis of activated Val-AMP. The other activity is designated 'posttransfer' editing and involves deacylation of mischarged Val-tRNA(Ile). This is Isoleucine--tRNA ligase from Methanocella arvoryzae (strain DSM 22066 / NBRC 105507 / MRE50).